The chain runs to 309 residues: tRNA dimethylallyltransferase (309 aa).

Residue glycine 13–serine 20 participates in ATP binding. Substrate is bound at residue threonine 15 to serine 20.

The protein belongs to the IPP transferase family. As to quaternary structure, monomer. Mg(2+) serves as cofactor.

It catalyses the reaction adenosine(37) in tRNA + dimethylallyl diphosphate = N(6)-dimethylallyladenosine(37) in tRNA + diphosphate. Catalyzes the transfer of a dimethylallyl group onto the adenine at position 37 in tRNAs that read codons beginning with uridine, leading to the formation of N6-(dimethylallyl)adenosine (i(6)A). The polypeptide is tRNA dimethylallyltransferase (Lacticaseibacillus paracasei (strain ATCC 334 / BCRC 17002 / CCUG 31169 / CIP 107868 / KCTC 3260 / NRRL B-441) (Lactobacillus paracasei)).